The sequence spans 259 residues: Pre-mRNA-splicing factor CWC24 (259 aa).

Residues 1–67 are disordered; that stretch reads MFRKRLVNKS…HENEGKLQKK (67 aa). Positions 25 to 39 are enriched in basic and acidic residues; it reads FSEEKLVASDEEKGS. Residue S33 is modified to Phosphoserine. Residues 47 to 57 are compositionally biased toward polar residues; it reads KSGNSRTLQLS. The span at 58-67 shows a compositional bias: basic and acidic residues; that stretch reads HENEGKLQKK. S105 carries the phosphoserine modification. The C3H1-type zinc finger occupies 138–166; it reads DFQPDVCKDYKQTGYCGYGDSCKFLHSRD. The RING-type zinc finger occupies 199 to 237; it reads CTLCKEDYKSPVVTNCGHYFCGSCFAKDMKKGTKCFICH.

This sequence belongs to the CWC24 family. Belongs to the CWC complex (or CEF1-associated complex), a spliceosome sub-complex reminiscent of a late-stage spliceosome composed of the U2, U5 and U6 snRNAs and at least BUD13, BUD31, BRR2, CDC40, CEF1, CLF1, CUS1, CWC2, CWC15, CWC21, CWC22, CWC23, CWC24, CWC25, CWC27, ECM2, HSH155, IST3, ISY1, LEA1, MSL1, NTC20, PRP8, PRP9, PRP11, PRP19, PRP21, PRP22, PRP45, PRP46, SLU7, SMB1, SMD1, SMD2, SMD3, SMX2, SMX3, SNT309, SNU114, SPP2, SYF1, SYF2, RSE1 and YJU2.

The protein localises to the nucleus. Functionally, involved in pre-mRNA splicing. The protein is Pre-mRNA-splicing factor CWC24 (CWC24) of Saccharomyces cerevisiae (strain ATCC 204508 / S288c) (Baker's yeast).